The sequence spans 122 residues: Small ribosomal subunit protein uS13 (122 aa).

The tract at residues 99–122 (RGQRTHTNARTRKGPAKAIAGKKK) is disordered.

It belongs to the universal ribosomal protein uS13 family. In terms of assembly, part of the 30S ribosomal subunit. Forms a loose heterodimer with protein S19. Forms two bridges to the 50S subunit in the 70S ribosome.

Functionally, located at the top of the head of the 30S subunit, it contacts several helices of the 16S rRNA. In the 70S ribosome it contacts the 23S rRNA (bridge B1a) and protein L5 of the 50S subunit (bridge B1b), connecting the 2 subunits; these bridges are implicated in subunit movement. Contacts the tRNAs in the A and P-sites. This is Small ribosomal subunit protein uS13 from Bradyrhizobium diazoefficiens (strain JCM 10833 / BCRC 13528 / IAM 13628 / NBRC 14792 / USDA 110).